Consider the following 471-residue polypeptide: Glutamate--tRNA ligase (471 aa).

A 'HIGH' region motif is present at residues proline 9 to glycine 19. Residues cysteine 98, cysteine 100, cysteine 125, and histidine 127 each contribute to the Zn(2+) site. Positions lysine 237–arginine 241 match the 'KMSKS' region motif. Position 240 (lysine 240) interacts with ATP.

This sequence belongs to the class-I aminoacyl-tRNA synthetase family. Glutamate--tRNA ligase type 1 subfamily. As to quaternary structure, monomer. Zn(2+) serves as cofactor.

The protein localises to the cytoplasm. The catalysed reaction is tRNA(Glu) + L-glutamate + ATP = L-glutamyl-tRNA(Glu) + AMP + diphosphate. Functionally, catalyzes the attachment of glutamate to tRNA(Glu) in a two-step reaction: glutamate is first activated by ATP to form Glu-AMP and then transferred to the acceptor end of tRNA(Glu). The protein is Glutamate--tRNA ligase of Salmonella paratyphi A (strain ATCC 9150 / SARB42).